A 312-amino-acid polypeptide reads, in one-letter code: Transcription initiation factor IIB (312 aa).

The TFIIB-type zinc-finger motif lies at 10–42 (FVQTCSDCGETQNIVEDYKNGYHVCGRCGCIVG). 4 residues coordinate Zn(2+): Cys14, Cys17, Cys34, and Cys37. Repeat copies occupy residues 120–196 (FCER…LISP) and 213–290 (FCSD…ELLT).

The protein belongs to the TFIIB family. In terms of assembly, associates with TFIID-IIA (DA complex) to form TFIID-IIA-IIB (DAB-complex) which is then recognized by polymerase II.

It localises to the nucleus. In terms of biological role, general factor that plays a major role in the activation of eukaryotic genes transcribed by RNA polymerase II. The polypeptide is Transcription initiation factor IIB (Encephalitozoon cuniculi (strain GB-M1) (Microsporidian parasite)).